A 1300-amino-acid polypeptide reads, in one-letter code: ATP-dependent RNA helicase HrpA (1300 aa).

Residues 87–250 (LEAIRDHQVV…FNNAPIIEVS (164 aa)) enclose the Helicase ATP-binding domain. Residue 100–107 (GETGSGKT) coordinates ATP. Residues 197–200 (DEAH) carry the DEAH box motif. In terms of domain architecture, Helicase C-terminal spans 274–444 (QLQAIFDAVD…SVILQMTALG (171 aa)).

It belongs to the DEAD box helicase family. DEAH subfamily.

It catalyses the reaction ATP + H2O = ADP + phosphate + H(+). Its function is as follows. Not yet known. The polypeptide is ATP-dependent RNA helicase HrpA (hrpA) (Escherichia coli (strain K12)).